The primary structure comprises 217 residues: Probable GTP-binding protein EngB (217 aa).

The region spanning S37–D214 is the EngB-type G domain. GTP is bound by residues G45–S52, G72–E76, D92–G95, T159–D162, and T193–S195. 2 residues coordinate Mg(2+): S52 and T74.

The protein belongs to the TRAFAC class TrmE-Era-EngA-EngB-Septin-like GTPase superfamily. EngB GTPase family. Mg(2+) is required as a cofactor.

Necessary for normal cell division and for the maintenance of normal septation. The protein is Probable GTP-binding protein EngB of Nitrobacter winogradskyi (strain ATCC 25391 / DSM 10237 / CIP 104748 / NCIMB 11846 / Nb-255).